The primary structure comprises 800 residues: Protein MICRORCHIDIA 4 (800 aa).

Disordered regions lie at residues 1-76 (MEPI…ARSD) and 552-702 (AKRQ…RTLS). Polar residues predominate over residues 9-18 (NPVTTSTLST). Residues 36-47 (ELSSSNEGSELG) show a composition bias toward low complexity. Basic and acidic residues-rich tracts occupy residues 559–578 (SAKD…EFDP) and 628–641 (VSKD…EKGG). Residues 666–675 (NSDDDYDCDS) are compositionally biased toward acidic residues. Residues 699-766 (RTLSQLEQEN…QASLIDVFAE (68 aa)) adopt a coiled-coil conformation. Short sequence motifs (nuclear localization signal) lie at residues 716 to 723 (DKKEEVFL) and 735 to 742 (LRKTLEAE).

This sequence belongs to the MORC ATPase protein family. In terms of assembly, homodimer and heterodimer. Component of an RNA-directed DNA methylation (RdDM) complex. Forms homomeric complexes. Mg(2+) is required as a cofactor. Mn(2+) serves as cofactor.

Its subcellular location is the nucleus. Exhibits ATPase activity. Binds DNA/RNA in a non-specific manner and exhibits endonuclease activity. Probably involved in DNA repair. Involved in RNA-directed DNA methylation (RdDM) as a component of the RdDM machinery and required for gene silencing. May also be involved in the regulation of chromatin architecture to maintain gene silencing. Together with MORC7, acts to suppress a wide set of non-methylated protein-coding genes, especially involved in pathogen response. Positive regulator of defense against the oomycete Hyaloperonospora arabidopsidis (Hpa). This Arabidopsis thaliana (Mouse-ear cress) protein is Protein MICRORCHIDIA 4.